The following is a 209-amino-acid chain: ATP-dependent Clp protease proteolytic subunit (209 aa).

S113 functions as the Nucleophile in the catalytic mechanism. The active site involves H138.

The protein belongs to the peptidase S14 family. As to quaternary structure, fourteen ClpP subunits assemble into 2 heptameric rings which stack back to back to give a disk-like structure with a central cavity, resembling the structure of eukaryotic proteasomes.

It is found in the cytoplasm. The enzyme catalyses Hydrolysis of proteins to small peptides in the presence of ATP and magnesium. alpha-casein is the usual test substrate. In the absence of ATP, only oligopeptides shorter than five residues are hydrolyzed (such as succinyl-Leu-Tyr-|-NHMec, and Leu-Tyr-Leu-|-Tyr-Trp, in which cleavage of the -Tyr-|-Leu- and -Tyr-|-Trp bonds also occurs).. Its function is as follows. Cleaves peptides in various proteins in a process that requires ATP hydrolysis. Has a chymotrypsin-like activity. Plays a major role in the degradation of misfolded proteins. The polypeptide is ATP-dependent Clp protease proteolytic subunit (Blochmanniella floridana).